The primary structure comprises 140 residues: Acyl-coenzyme A thioesterase 13 (140 aa).

At Met-1 the chain carries N-acetylmethionine. N6-acetyllysine is present on residues Lys-27, Lys-37, and Lys-43. Glu-46 contributes to the CoA binding site. The substrate site is built by Asn-50 and Gly-81. CoA contacts are provided by residues Ser-83, 90–95 (YMSPAK), and 108–113 (KQGKTL). N6-acetyllysine is present on residues Lys-108 and Lys-127. His-137 serves as a coordination point for CoA.

The protein belongs to the thioesterase PaaI family. Homotetramer. Interacts with PCTP. As to expression, highly expressed in the kidney and moderately in the heart, liver, brain, small and large intestine. Also expressed in brown adipose tissue.

Its subcellular location is the cytoplasm. The protein resides in the cytosol. It localises to the mitochondrion. It is found in the nucleus. The protein localises to the cytoskeleton. Its subcellular location is the spindle. It carries out the reaction a fatty acyl-CoA + H2O = a fatty acid + CoA + H(+). The catalysed reaction is decanoyl-CoA + H2O = decanoate + CoA + H(+). The enzyme catalyses octanoyl-CoA + H2O = octanoate + CoA + H(+). It catalyses the reaction butanoyl-CoA + H2O = butanoate + CoA + H(+). It carries out the reaction hexanoyl-CoA + H2O = hexanoate + CoA + H(+). The catalysed reaction is tetradecanoyl-CoA + H2O = tetradecanoate + CoA + H(+). The enzyme catalyses hexadecanoyl-CoA + H2O = hexadecanoate + CoA + H(+). It catalyses the reaction dodecanoyl-CoA + H2O = dodecanoate + CoA + H(+). It carries out the reaction (9Z)-octadecenoyl-CoA + H2O = (9Z)-octadecenoate + CoA + H(+). Functionally, catalyzes the hydrolysis of acyl-CoAs into free fatty acids and coenzyme A (CoASH), regulating their respective intracellular levels. Has acyl-CoA thioesterase activity towards medium (C12) and long-chain (C18) fatty acyl-CoA substrates. Can also hydrolyze 3-hydroxyphenylacetyl-CoA and 3,4-dihydroxyphenylacetyl-CoA (in vitro). May play a role in controlling adaptive thermogenesis. This chain is Acyl-coenzyme A thioesterase 13, found in Mus musculus (Mouse).